The chain runs to 37 residues: Large ribosomal subunit protein bL36c (37 aa).

Belongs to the bacterial ribosomal protein bL36 family.

Its subcellular location is the plastid. It localises to the chloroplast. The chain is Large ribosomal subunit protein bL36c from Cyanidioschyzon merolae (strain NIES-3377 / 10D) (Unicellular red alga).